A 291-amino-acid chain; its full sequence is Protease HtpX homolog (291 aa).

2 helical membrane-spanning segments follow: residues 4 to 24 (ILLF…VASL) and 39 to 59 (GSLL…SLLI). Residue H144 participates in Zn(2+) binding. E145 is an active-site residue. Residue H148 participates in Zn(2+) binding. The next 2 helical transmembrane spans lie at 159–179 (LIQG…AFAI) and 199–219 (ITTV…VAWF). A Zn(2+)-binding site is contributed by E224.

Belongs to the peptidase M48B family. Zn(2+) is required as a cofactor.

It is found in the cell inner membrane. In Albidiferax ferrireducens (strain ATCC BAA-621 / DSM 15236 / T118) (Rhodoferax ferrireducens), this protein is Protease HtpX homolog.